The primary structure comprises 102 residues: UPF0213 protein Ent638_3592 (102 aa).

In terms of domain architecture, GIY-YIG spans 4-79 (VCWFLYLVRT…KQLTKRQKER (76 aa)).

This sequence belongs to the UPF0213 family.

This is UPF0213 protein Ent638_3592 from Enterobacter sp. (strain 638).